A 413-amino-acid polypeptide reads, in one-letter code: MKTAVEKIFSDKSGNDARAGDYVIANLDYVMVNDITGPIAIDAFNELGYKPLSDRIVVIPDHFVPPKDINSAIQYKKVKDFALKHNTHFYDLGRGGVCHQVMMEKGFAAPGRLIAGADSHTNTYGALSCVSVGIGSTEAGVIFGTGRMWFKVPETDLIRINGRPKKGVYGKDIILNVLSRIGNGGSAYKCMEFTGSTIDYLDINERMTMANMTTEAGAKCSFFNADEKTLDYIRNKTNDYKIYKDDENAEYSRIIDIDASEIEPSVAIPNSPDNVRPVSKVSERIDQAYIGSCTNGRIEDIRRAALILKDKKIDKNVRLMVVPASQEVYNQALKEGLVDIITDAGGYFAGTTCGACLGGYMGVLGPGETCISTTNRNFIGRMGDRTSRVYLANPEVVAASAIMGRIASPEEIQ.

3 residues coordinate [4Fe-4S] cluster: Cys-293, Cys-353, and Cys-356.

It belongs to the aconitase/IPM isomerase family. LeuC type 2 subfamily. In terms of assembly, heterodimer of LeuC and LeuD. The cofactor is [4Fe-4S] cluster.

It carries out the reaction (2R,3S)-3-isopropylmalate = (2S)-2-isopropylmalate. It participates in amino-acid biosynthesis; L-leucine biosynthesis; L-leucine from 3-methyl-2-oxobutanoate: step 2/4. Its function is as follows. Catalyzes the isomerization between 2-isopropylmalate and 3-isopropylmalate, via the formation of 2-isopropylmaleate. This is 3-isopropylmalate dehydratase large subunit from Picrophilus torridus (strain ATCC 700027 / DSM 9790 / JCM 10055 / NBRC 100828 / KAW 2/3).